The sequence spans 147 residues: Hemoglobin subunit epsilon (147 aa).

Positions 3 to 147 constitute a Globin domain; that stretch reads HFTAEEKAAV…VAIALAHKYH (145 aa). Phosphoserine is present on residues serine 14 and serine 51. Heme b contacts are provided by histidine 64 and histidine 93.

It belongs to the globin family. In terms of assembly, heterotetramer of two alpha chains and two epsilon chains in early embryonic hemoglobin Gower-2; two zeta chains and two epsilon chains in early embryonic hemoglobin Gower-1. Red blood cells.

Its function is as follows. The epsilon chain is a beta-type chain of early mammalian embryonic hemoglobin. In Pan paniscus (Pygmy chimpanzee), this protein is Hemoglobin subunit epsilon (HBE1).